The following is a 377-amino-acid chain: Leukocyte elastase inhibitor (377 aa).

M1 carries the post-translational modification N-acetylmethionine. N6-acetyllysine is present on K136. S298 carries the post-translational modification Phosphoserine. Residues 349–377 form a CARD-binding motif (CBM) region; the sequence is EFVADHPFIFFIRHKPSSNILFLGRLSSP.

The protein belongs to the serpin family. Ov-serpin subfamily. In terms of assembly, monomer. Interacts (via C-terminus) with CASP1; CASP4 (via CARD domain) and CASP5; these interactions regulate the activity of inflammatory caspases. Interacts with PRTN3. Interacts with GZMH.

It is found in the secreted. Its subcellular location is the cytoplasm. The protein resides in the cytolytic granule. It localises to the early endosome. Its function is as follows. Neutrophil serine protease inhibitor that plays an essential role in the regulation of the innate immune response, inflammation and cellular homeostasis. Acts primarily to protect the cell from proteases released in the cytoplasm during stress or infection. These proteases are important in killing microbes but when released from granules, these potent enzymes also destroy host proteins and contribute to mortality. Regulates the activity of the neutrophil proteases elastase, cathepsin G, proteinase-3, chymase, chymotrypsin, and kallikrein-3. Also acts as a potent intracellular inhibitor of GZMH by directly blocking its proteolytic activity. During inflammation, limits the activity of inflammatory caspases CASP1, CASP4 and CASP5 by suppressing their caspase-recruitment domain (CARD) oligomerization and enzymatic activation. When secreted, promotes the proliferation of beta-cells via its protease inhibitory function. The protein is Leukocyte elastase inhibitor (SERPINB1) of Bos taurus (Bovine).